The primary structure comprises 296 residues: Phosphoribosylaminoimidazole-succinocarboxamide synthase (296 aa).

This sequence belongs to the SAICAR synthetase family.

It catalyses the reaction 5-amino-1-(5-phospho-D-ribosyl)imidazole-4-carboxylate + L-aspartate + ATP = (2S)-2-[5-amino-1-(5-phospho-beta-D-ribosyl)imidazole-4-carboxamido]succinate + ADP + phosphate + 2 H(+). Its pathway is purine metabolism; IMP biosynthesis via de novo pathway; 5-amino-1-(5-phospho-D-ribosyl)imidazole-4-carboxamide from 5-amino-1-(5-phospho-D-ribosyl)imidazole-4-carboxylate: step 1/2. The sequence is that of Phosphoribosylaminoimidazole-succinocarboxamide synthase from Lachnospira eligens (strain ATCC 27750 / DSM 3376 / VPI C15-48 / C15-B4) (Eubacterium eligens).